The sequence spans 478 residues: Flotillin-like protein 1 (478 aa).

Cysteine 35 carries S-palmitoyl cysteine lipidation. Residues 235 to 277 (ENQREAEVAEANSELAKKKAAWTMAAQVAELEAAKAVALREAE) adopt a coiled-coil conformation.

It belongs to the band 7/mec-2 family. Flotillin subfamily. In terms of processing, may be palmitoylated. As to expression, expressed in all plant organs. Primarily expressed in vascular tissues. No change in spatial expression in root upon inoculation. Expression limited to the nodule vascular tissue.

Its subcellular location is the cell membrane. The protein resides in the membrane. It is found in the caveola. In terms of biological role, may act as a scaffolding protein within caveolar membranes, functionally participating in formation of caveolae or caveolae-like vesicles. May be involved in nodule formation. The polypeptide is Flotillin-like protein 1 (FLOT1) (Medicago truncatula (Barrel medic)).